The chain runs to 25 residues: Defensin D3 (25 aa).

It belongs to the DEFL family. Group IV subfamily. Distributed in the epidermal cell layer of leaves and in the subepidermal layer region of stems. Not in roots.

The protein resides in the secreted. It is found in the cell wall. Antimicrobial peptide. Active against Fusarium spp., Gram-positive and Gram-negative bacterial pathogens. The chain is Defensin D3 from Spinacia oleracea (Spinach).